The following is a 370-amino-acid chain: 4-hydroxy-3-methylbut-2-en-1-yl diphosphate synthase (flavodoxin) (370 aa).

Cys-270, Cys-273, Cys-305, and Glu-312 together coordinate [4Fe-4S] cluster.

The protein belongs to the IspG family. [4Fe-4S] cluster is required as a cofactor.

It catalyses the reaction (2E)-4-hydroxy-3-methylbut-2-enyl diphosphate + oxidized [flavodoxin] + H2O + 2 H(+) = 2-C-methyl-D-erythritol 2,4-cyclic diphosphate + reduced [flavodoxin]. Its pathway is isoprenoid biosynthesis; isopentenyl diphosphate biosynthesis via DXP pathway; isopentenyl diphosphate from 1-deoxy-D-xylulose 5-phosphate: step 5/6. In terms of biological role, converts 2C-methyl-D-erythritol 2,4-cyclodiphosphate (ME-2,4cPP) into 1-hydroxy-2-methyl-2-(E)-butenyl 4-diphosphate. This chain is 4-hydroxy-3-methylbut-2-en-1-yl diphosphate synthase (flavodoxin), found in Ectopseudomonas mendocina (strain ymp) (Pseudomonas mendocina).